The sequence spans 457 residues: Bifunctional protein GlmU (457 aa).

Residues 1–230 (MSKRYAVVLA…FEESLGVNDR (230 aa)) are pyrophosphorylase. UDP-N-acetyl-alpha-D-glucosamine is bound by residues 9–12 (LAAG), K23, Q73, and 78–79 (GT). D103 serves as a coordination point for Mg(2+). UDP-N-acetyl-alpha-D-glucosamine is bound by residues G140, E155, N170, and N228. N228 lines the Mg(2+) pocket. A linker region spans residues 231–251 (IALAEASKLMQRRINENHMRN). An N-acetyltransferase region spans residues 252-457 (GVTLVNPENT…GYAKHLNHGK (206 aa)). UDP-N-acetyl-alpha-D-glucosamine contacts are provided by R333 and K351. The active-site Proton acceptor is the H363. The UDP-N-acetyl-alpha-D-glucosamine site is built by Y366 and N377. Residues 386–387 (NY), A423, and R440 each bind acetyl-CoA.

This sequence in the N-terminal section; belongs to the N-acetylglucosamine-1-phosphate uridyltransferase family. The protein in the C-terminal section; belongs to the transferase hexapeptide repeat family. In terms of assembly, homotrimer. Requires Mg(2+) as cofactor.

The protein resides in the cytoplasm. It carries out the reaction alpha-D-glucosamine 1-phosphate + acetyl-CoA = N-acetyl-alpha-D-glucosamine 1-phosphate + CoA + H(+). The enzyme catalyses N-acetyl-alpha-D-glucosamine 1-phosphate + UTP + H(+) = UDP-N-acetyl-alpha-D-glucosamine + diphosphate. Its pathway is nucleotide-sugar biosynthesis; UDP-N-acetyl-alpha-D-glucosamine biosynthesis; N-acetyl-alpha-D-glucosamine 1-phosphate from alpha-D-glucosamine 6-phosphate (route II): step 2/2. It functions in the pathway nucleotide-sugar biosynthesis; UDP-N-acetyl-alpha-D-glucosamine biosynthesis; UDP-N-acetyl-alpha-D-glucosamine from N-acetyl-alpha-D-glucosamine 1-phosphate: step 1/1. The protein operates within bacterial outer membrane biogenesis; LPS lipid A biosynthesis. Functionally, catalyzes the last two sequential reactions in the de novo biosynthetic pathway for UDP-N-acetylglucosamine (UDP-GlcNAc). The C-terminal domain catalyzes the transfer of acetyl group from acetyl coenzyme A to glucosamine-1-phosphate (GlcN-1-P) to produce N-acetylglucosamine-1-phosphate (GlcNAc-1-P), which is converted into UDP-GlcNAc by the transfer of uridine 5-monophosphate (from uridine 5-triphosphate), a reaction catalyzed by the N-terminal domain. The protein is Bifunctional protein GlmU of Listeria innocua serovar 6a (strain ATCC BAA-680 / CLIP 11262).